Here is a 767-residue protein sequence, read N- to C-terminus: TBC1 domain family member 16 (767 aa).

Disordered stretches follow at residues 93 to 138 and 169 to 228; these read EALR…TPKD and GVDG…SFDS. The segment covering 107-117 has biased composition (basic residues); that stretch reads KAPRPRGRRTR. Over residues 175–194 the composition is skewed to polar residues; the sequence is PASQPACSPSGILSTVSPQD. Residues 197 to 206 are compositionally biased toward basic and acidic residues; the sequence is EEGREPRPEA. In terms of domain architecture, Rab-GAP TBC spans 425–635; the sequence is GIDVSIRGEV…RIWEACWAHY (211 aa). The segment at 729–767 is disordered; it reads HPGSESCPYGGTVEMPSPKSLREGKKGPKTPQDGFGFRR.

May act as a GTPase-activating protein for Rab family protein(s). This is TBC1 domain family member 16 (TBC1D16) from Homo sapiens (Human).